A 428-amino-acid chain; its full sequence is Serine hydroxymethyltransferase (428 aa).

Residues leucine 117 and 121–123 each bind (6S)-5,6,7,8-tetrahydrofolate; that span reads GHL. The residue at position 226 (lysine 226) is an N6-(pyridoxal phosphate)lysine.

Belongs to the SHMT family. As to quaternary structure, homodimer. The cofactor is pyridoxal 5'-phosphate.

Its subcellular location is the cytoplasm. The catalysed reaction is (6R)-5,10-methylene-5,6,7,8-tetrahydrofolate + glycine + H2O = (6S)-5,6,7,8-tetrahydrofolate + L-serine. It participates in one-carbon metabolism; tetrahydrofolate interconversion. It functions in the pathway amino-acid biosynthesis; glycine biosynthesis; glycine from L-serine: step 1/1. In terms of biological role, catalyzes the reversible interconversion of serine and glycine with tetrahydrofolate (THF) serving as the one-carbon carrier. This reaction serves as the major source of one-carbon groups required for the biosynthesis of purines, thymidylate, methionine, and other important biomolecules. Also exhibits THF-independent aldolase activity toward beta-hydroxyamino acids, producing glycine and aldehydes, via a retro-aldol mechanism. This chain is Serine hydroxymethyltransferase, found in Aquifex aeolicus (strain VF5).